The primary structure comprises 393 residues: Probable acetyl-CoA acyltransferase (393 aa).

Catalysis depends on cysteine 88, which acts as the Acyl-thioester intermediate. Catalysis depends on proton acceptor residues histidine 349 and cysteine 378.

This sequence belongs to the thiolase-like superfamily. Thiolase family.

It localises to the cytoplasm. It catalyses the reaction 2 acetyl-CoA = acetoacetyl-CoA + CoA. The protein is Probable acetyl-CoA acyltransferase of Staphylococcus aureus (strain NCTC 8325 / PS 47).